Consider the following 1381-residue polypeptide: Hepatocyte growth factor receptor (1381 aa).

The first 24 residues, 1–24 (MKAPAVLAPGILVLLFTLVQKSDG), serve as a signal peptide directing secretion. Residues 25 to 934 (ECKEALVKSE…VQPDQNFTGL (910 aa)) lie on the Extracellular side of the membrane. The Sema domain maps to 27 to 515 (KEALVKSEMN…TGKKITKIPL (489 aa)). Asn45 carries N-linked (GlcNAc...) asparagine glycosylation. Cystine bridges form between Cys95–Cys101, Cys98–Cys160, Cys133–Cys141, and Cys172–Cys175. Asn106 carries an N-linked (GlcNAc...) asparagine glycan. N-linked (GlcNAc...) asparagine glycans are attached at residues Asn202 and Asn358. Disulfide bonds link Cys298–Cys363 and Cys385–Cys397. 3 N-linked (GlcNAc...) asparagine glycosylation sites follow: Asn399, Asn405, and Asn449. 4 disulfide bridges follow: Cys520-Cys538, Cys526-Cys561, Cys529-Cys545, and Cys541-Cys551. A glycan (N-linked (GlcNAc...) asparagine) is linked at Asn553. IPT/TIG domains lie at 563-655 (PTIY…FSYV), 657-739 (PIIT…FSYR), and 742-836 (PIVY…LIYV). A glycan (O-linked (Man) threonine) is linked at Thr582. N-linked (GlcNAc...) asparagine glycosylation is found at Asn607 and Asn635. Thr676 and Thr761 each carry an O-linked (Man) threonine glycan. Residues Asn785, Asn879, and Asn930 are each glycosylated (N-linked (GlcNAc...) asparagine). Residues 935–955 (IVGVVSISIILLLLLGLFLWL) form a helical membrane-spanning segment. Residues 956 to 1381 (KRRKQIKDLG…QDNVDGEVDT (426 aa)) are Cytoplasmic-facing. Ser966 is modified (phosphoserine). Position 977 is a phosphothreonine (Thr977). Residues Ser990, Ser997, and Ser1000 each carry the phosphoserine modification. A Phosphotyrosine modification is found at Tyr1003. The 268-residue stretch at 1078 to 1345 (VHFNEVIGRG…RISAIFSTFI (268 aa)) folds into the Protein kinase domain. Residues 1084-1092 (IGRGHFGCV) and Lys1110 contribute to the ATP site. Residue Asp1204 is the Proton acceptor of the active site. Residues 1212–1381 (LDEKFTVKVA…QDNVDGEVDT (170 aa)) are interaction with RANBP9. Phosphotyrosine is present on Tyr1230. Tyr1234 and Tyr1235 each carry phosphotyrosine; by autocatalysis. Residue Thr1289 is modified to Phosphothreonine. An interaction with MUC20 region spans residues 1320-1359 (WHPKAELRPSFSELVSRISAIFSTFIGEHYVHVNATYVNV). Tyr1349 and Tyr1356 each carry phosphotyrosine; by autocatalysis. Tyr1365 bears the Phosphotyrosine mark.

It belongs to the protein kinase superfamily. Tyr protein kinase family. Heterodimer made of an alpha chain (50 kDa) and a beta chain (145 kDa) which are disulfide linked. Binds PLXNB1. Interacts when phosphorylated with downstream effectors including STAT3, PIK3R1, SRC, PCLG1, GRB2 and GAB1. Interacts with SPSB1, SPSB2 and SPSB4. Interacts with INPP5D/SHIP1. When phosphorylated at Tyr-1356, interacts with INPPL1/SHIP2. Interacts with RANBP9 and RANBP10, as well as SPSB1, SPSB2, SPSB3 and SPSB4. SPSB1 binding occurs in the presence and in the absence of HGF, however HGF treatment has a positive effect on this interaction. Interacts with MUC20; prevents interaction with GRB2 and suppresses hepatocyte growth factor-induced cell proliferation. Interacts with GRB10. Interacts with PTPN1 and PTPN2. Interacts with HSP90AA1 and HSP90AB1; the interaction suppresses MET kinase activity. Interacts with tensin TNS3. Interacts (when phosphorylated) with tensin TNS4 (via SH2 domain); the interaction increases MET protein stability by inhibiting MET endocytosis and subsequent lysosomal degradation. Autophosphorylated in response to ligand binding on Tyr-1234 and Tyr-1235 in the kinase domain leading to further phosphorylation of Tyr-1349 and Tyr-1356 in the C-terminal multifunctional docking site. Dephosphorylated by PTPRJ at Tyr-1349 and Tyr-1365. Dephosphorylated by PTPN1 and PTPN2. In terms of processing, ubiquitinated. Ubiquitination by CBL regulates the receptor stability and activity through proteasomal degradation. Post-translationally, O-mannosylation of IPT/TIG domains by TMEM260 is required for protein maturation. O-mannosylated residues are composed of single mannose glycans that are not elongated or modified.

The protein resides in the membrane. The catalysed reaction is L-tyrosyl-[protein] + ATP = O-phospho-L-tyrosyl-[protein] + ADP + H(+). With respect to regulation, in its inactive state, the C-terminal tail interacts with the catalytic domain and inhibits the kinase activity. Upon ligand binding, the C-terminal tail is displaced and becomes phosphorylated, thus increasing the kinase activity. Receptor tyrosine kinase that transduces signals from the extracellular matrix into the cytoplasm by binding to hepatocyte growth factor/HGF ligand. Regulates many physiological processes including proliferation, scattering, morphogenesis and survival. Ligand binding at the cell surface induces autophosphorylation of MET on its intracellular domain that provides docking sites for downstream signaling molecules. Following activation by ligand, interacts with the PI3-kinase subunit PIK3R1, PLCG1, SRC, GRB2, STAT3 or the adapter GAB1. Recruitment of these downstream effectors by MET leads to the activation of several signaling cascades including the RAS-ERK, PI3 kinase-AKT, or PLCgamma-PKC. The RAS-ERK activation is associated with the morphogenetic effects while PI3K/AKT coordinates prosurvival effects. During embryonic development, MET signaling plays a role in gastrulation, development and migration of muscles and neuronal precursors, angiogenesis and kidney formation. In adults, participates in wound healing as well as organ regeneration and tissue remodeling. Also promotes differentiation and proliferation of hematopoietic cells. The protein is Hepatocyte growth factor receptor (MET) of Equus caballus (Horse).